Reading from the N-terminus, the 141-residue chain is Protein C19orf12 homolog (141 aa).

A helical transmembrane segment spans residues 37-57; sequence GLAFAGGLIGGPLGIAVGGAV.

Belongs to the C19orf12 family.

It localises to the mitochondrion. The protein localises to the mitochondrion membrane. Its subcellular location is the endoplasmic reticulum. The protein resides in the cytoplasm. It is found in the cytosol. This chain is Protein C19orf12 homolog, found in Danio rerio (Zebrafish).